Reading from the N-terminus, the 2101-residue chain is General transcription factor 3C polypeptide 1 (2101 aa).

Positions 473 to 487 (GEEAFLSDSESEEES) are enriched in acidic residues. 2 disordered regions span residues 473–574 (GEEA…MDSH) and 588–609 (NPKE…DKPH). Over residues 492 to 503 (GKRRGRGSRGHA) the composition is skewed to basic residues. Positions 504–513 (RASGDAGSGS) are enriched in low complexity. A Glycyl lysine isopeptide (Lys-Gly) (interchain with G-Cter in SUMO2) cross-link involves residue Lys534. Position 667 is a phosphoserine (Ser667). Disordered regions lie at residues 718-772 (STAN…EKMG) and 820-864 (GEQP…SSWE). A compositionally biased stretch (polar residues) spans 747–759 (RSANSDPNTSSKP). 2 stretches are compositionally biased toward basic and acidic residues: residues 760-771 (ESTRVKKTDEKM) and 826-836 (HSERKTGKQES). Residues Lys770 and Lys833 each participate in a glycyl lysine isopeptide (Lys-Gly) (interchain with G-Cter in SUMO2) cross-link. Position 1063 is a phosphoserine (Ser1063). A compositionally biased stretch (basic and acidic residues) spans 1186 to 1196 (EEQFELDREPT). Disordered stretches follow at residues 1186–1239 (EEQF…KKLR), 1598–1627 (KSLG…QGVE), and 1822–1923 (DTKA…QENQ). At Thr1196 the chain carries Phosphothreonine. Over residues 1199–1215 (RNRKVRGGKSQKRKRLK) the composition is skewed to basic residues. A compositionally biased stretch (basic and acidic residues) spans 1229-1239 (EHPEAKSKKLR). Over residues 1606-1617 (LDDDEEEEDLDE) the composition is skewed to acidic residues. The span at 1822–1831 (DTKASGDDSQ) shows a compositional bias: basic and acidic residues. Ser1854 and Ser1890 each carry phosphoserine. Over residues 1900–1910 (EAQAPAQLAAP) the composition is skewed to low complexity.

The protein belongs to the TFIIIC subunit 1 family. Part of the TFIIIC subcomplex TFIIIC2, consisting of six subunits, GTF3C1, GTF3C2, GTF3C3, GTF3C4, GTF3C5 and GTF3C6. Interacts with IGHMBP2. Interacts with MAF1.

Its subcellular location is the nucleus. In terms of biological role, required for RNA polymerase III-mediated transcription. Component of TFIIIC that initiates transcription complex assembly on tRNA and is required for transcription of 5S rRNA and other stable nuclear and cytoplasmic RNAs. Binds to the box B promoter element. The sequence is that of General transcription factor 3C polypeptide 1 (Gtf3c1) from Mus musculus (Mouse).